The sequence spans 105 residues: Protein LBH (105 aa).

Residues 18–104 (MTEVMMNTQP…CEETAKENKE (87 aa)) form the LBH domain. Ser63 is subject to Phosphoserine. Residues 86-96 (LVQEDEQDNCE) are compositionally biased toward acidic residues. Positions 86-105 (LVQEDEQDNCEETAKENKEQ) are disordered.

This sequence belongs to the LBH family. In terms of tissue distribution, highly expressed in heart, and expressed at low levels in placenta, lung, skeletal muscle, kidney and liver.

The protein localises to the nucleus. It localises to the cytoplasm. Transcriptional activator which may act in mitogen-activated protein kinase signaling pathway. The polypeptide is Protein LBH (Homo sapiens (Human)).